Consider the following 536-residue polypeptide: Pre-mRNA 3'-end-processing factor FIP1 (536 aa).

Basic and acidic residues-rich tracts occupy residues 1 to 10 (MSAGEVERLV) and 32 to 42 (VHVHSDLAKDL). Disordered regions lie at residues 1–95 (MSAG…EDDV), 212–246 (VQQG…GLPP), and 300–536 (FPPG…APAE). The tract at residues 1–110 (MSAGEVERLV…DIKTGAPQYG (110 aa)) is sufficient for interaction with PAPOLA. A necessary for stimulating PAPOLA activity region spans residues 1 to 296 (MSAGEVERLV…TEVDNNFSKP (296 aa)). 2 stretches are compositionally biased toward acidic residues: residues 43–54 (DENEVERPEEEN) and 80–94 (TEDD…DEDD). Phosphoserine occurs at positions 84, 86, and 88. Residues 136–219 (KGVDLDAPGS…ITVQQGRTGN (84 aa)) are sufficient for interaction with CPSF4. Residues 300-344 (FPPGAPPTHLPPPPFLPPPPTVSTAPPLIPPPGFPPPPGAPPPSL) show a composition bias toward pro residues. Y366 is subject to Phosphotyrosine. Over residues 374–390 (LTSSAPSWPSLVDTTKQ) the composition is skewed to polar residues. The sufficient for interaction with CPSF1 and CSTF3 stretch occupies residues 383 to 536 (SLVDTTKQWD…QESTEAAPAE (154 aa)). Basic and acidic residues predominate over residues 394–434 (YARREKDRDRDRERDRDRERERDRDRERERTRERERERDHS). The interval 397–432 (REKDRDRDRERDRDRERERDRDRERERTRERERERD) is arg/Asp/Glu-rich domain. Residue S434 is modified to Phosphoserine. T436 bears the Phosphothreonine mark. Phosphoserine occurs at positions 438 and 442. Residues 443–470 (DEERYRYREYAERGYERHRASREKEERH) show a composition bias toward basic and acidic residues. A compositionally biased stretch (basic residues) spans 484-493 (KSSRSNSRRR). S496 carries the phosphoserine modification. Positions 502 to 512 (HRRHKHKKSKR) are enriched in basic residues.

Belongs to the FIP1 family. As to quaternary structure, component of the cleavage and polyadenylation specificity factor (CPSF) complex, composed of CPSF1, CPSF2, CPSF3, CPSF4 and FIP1L1. Found in a complex with CPSF1, FIP1L1 and PAPOLA. Interacts with CPSF1, CPSF4, CSTF2 and CSTF3. Interacts with AHCYL1 (when phosphorylated); the interaction is direct and associates AHCYL1 with the CPSF complex and RNA. Interacts with PAPOLA; the interaction seems to be increased by the interaction with AHCYL1. Interacts with NUDT21/CPSF5; this interaction occurs in a RNA sequence-specific manner. Interacts (preferentially via unphosphorylated form and Arg/Glu/Asp-rich domain) with CPSF6 (via Arg/Ser-rich domain); this interaction mediates, at least in part, the interaction between the CFIm and CPSF complexes and may be inhibited by CPSF6 hyper-phosphorylation. Interacts (preferentially via unphosphorylated form and Arg/Asp/Glu-rich domain) with CPSF7 (via Arg/Ser-rich domain); this interaction mediates, at least in part, the interaction between the CFIm and CPSF complexes and may be inhibited by CPSF7 hyper-phosphorylation.

It localises to the nucleus. Functionally, component of the cleavage and polyadenylation specificity factor (CPSF) complex that plays a key role in pre-mRNA 3'-end formation, recognizing the AAUAAA signal sequence and interacting with poly(A) polymerase and other factors to bring about cleavage and poly(A) addition. FIP1L1 contributes to poly(A) site recognition and stimulates poly(A) addition. Binds to U-rich RNA sequence elements surrounding the poly(A) site. May act to tether poly(A) polymerase to the CPSF complex. This Rattus norvegicus (Rat) protein is Pre-mRNA 3'-end-processing factor FIP1 (Fip1l1).